A 93-amino-acid polypeptide reads, in one-letter code: Pyrimidine/purine nucleoside phosphorylase (93 aa).

It belongs to the nucleoside phosphorylase PpnP family.

The enzyme catalyses a purine D-ribonucleoside + phosphate = a purine nucleobase + alpha-D-ribose 1-phosphate. The catalysed reaction is adenosine + phosphate = alpha-D-ribose 1-phosphate + adenine. It catalyses the reaction cytidine + phosphate = cytosine + alpha-D-ribose 1-phosphate. It carries out the reaction guanosine + phosphate = alpha-D-ribose 1-phosphate + guanine. The enzyme catalyses inosine + phosphate = alpha-D-ribose 1-phosphate + hypoxanthine. The catalysed reaction is thymidine + phosphate = 2-deoxy-alpha-D-ribose 1-phosphate + thymine. It catalyses the reaction uridine + phosphate = alpha-D-ribose 1-phosphate + uracil. It carries out the reaction xanthosine + phosphate = alpha-D-ribose 1-phosphate + xanthine. Its function is as follows. Catalyzes the phosphorolysis of diverse nucleosides, yielding D-ribose 1-phosphate and the respective free bases. Can use uridine, adenosine, guanosine, cytidine, thymidine, inosine and xanthosine as substrates. Also catalyzes the reverse reactions. The chain is Pyrimidine/purine nucleoside phosphorylase from Pseudomonas syringae pv. syringae (strain B728a).